The primary structure comprises 1304 residues: Histone-lysine N-methyltransferase met-2 (1304 aa).

Over residues 1–16 (MDQQEPSNNVDTSSIL) the composition is skewed to polar residues. A disordered region spans residues 1–31 (MDQQEPSNNVDTSSILSDDGMETQEQSSFVT). The stretch at 97-129 (NESEQEAVAAQRRVDAEKTAKDEAELKQQEEAE) forms a coiled coil. The region spanning 834–909 (FHRNSPIHTP…FSFDARIDTA (76 aa)) is the MBD domain. In terms of domain architecture, Pre-SET spans 971–1049 (SGCSCDGDCS…SCYNRVVQNN (79 aa)). Positions 973, 975, 979, 985, 987, 1030, 1034, 1036, and 1041 each coordinate Zn(2+). Residues 1052-1277 (YPMHIFKTAQ…AGDELTWDYQ (226 aa)) enclose the SET domain. Residues 1062–1064 (SGW), Asp-1098, and Tyr-1100 each bind S-adenosyl-L-methionine. Positions 1113–1122 (EKGREDHETD) are enriched in basic and acidic residues. The disordered stretch occupies residues 1113 to 1201 (EKGREDHETD…DSMEKDNIES (89 aa)). Positions 1128–1144 (DESDYDDEEGSDGDSGD) are enriched in acidic residues. Positions 1152-1165 (KRQDSSESGEETKR) are enriched in basic and acidic residues. The segment covering 1166 to 1178 (LTRQKRKQSKKSG) has biased composition (basic residues). The span at 1182-1201 (SVEKDDTTPRDSMEKDNIES) shows a compositional bias: basic and acidic residues. S-adenosyl-L-methionine contacts are provided by residues Arg-1231 and 1234-1235 (NH). Zn(2+)-binding residues include Cys-1237, Cys-1290, Cys-1292, and Cys-1297. One can recognise a Post-SET domain in the interval 1286-1302 (TQLTCHCGAENCTGRLL).

Belongs to the class V-like SAM-binding methyltransferase superfamily.

It is found in the nucleus. The protein resides in the chromosome. The protein localises to the cytoplasm. The catalysed reaction is N(6)-methyl-L-lysyl(9)-[histone H3] + S-adenosyl-L-methionine = N(6),N(6)-dimethyl-L-lysyl(9)-[histone H3] + S-adenosyl-L-homocysteine + H(+). It carries out the reaction L-lysyl(9)-[histone H3] + S-adenosyl-L-methionine = N(6)-methyl-L-lysyl(9)-[histone H3] + S-adenosyl-L-homocysteine + H(+). In terms of biological role, histone methyltransferase which is required for the mono- and dimethylation of 'Lys-9' of histone H3. This increases the efficiency of set-25-mediated trimethylation of histone H3 'Lys-9'. Involved in the transcriptional repression of lin-3 which is required for the negative regulation of vulval cell fate specification during postembryonic development. Has a role in blocking checkpoint signaling and mediating the transcriptional silencing of meiotic sex chromosome inactivation; a mechanism which enables checkpoint proteins to distinguish between the partnerless male X chromosome and asynapsed chromosomes thereby shielding the lone X from inappropriate activation of an apoptotic program. Operates redundantly with set-25 to position chromatin at the nuclear periphery. Required for small-RNA-induced H3K9 methylation. Together with set-25, protects and stabilizes repeat-rich genomic regions by suppressing transcription-induced replication stress through methylation of H3K9. Together with spr-5, required for transgenerational fertility. The chain is Histone-lysine N-methyltransferase met-2 (met-2) from Caenorhabditis elegans.